A 464-amino-acid chain; its full sequence is Argininosuccinate lyase (464 aa).

This sequence belongs to the lyase 1 family. Argininosuccinate lyase subfamily.

Its subcellular location is the cytoplasm. It catalyses the reaction 2-(N(omega)-L-arginino)succinate = fumarate + L-arginine. Its pathway is amino-acid biosynthesis; L-arginine biosynthesis; L-arginine from L-ornithine and carbamoyl phosphate: step 3/3. This Crocosphaera subtropica (strain ATCC 51142 / BH68) (Cyanothece sp. (strain ATCC 51142)) protein is Argininosuccinate lyase.